A 318-amino-acid chain; its full sequence is tRNA U34 carboxymethyltransferase (318 aa).

7 residues coordinate carboxy-S-adenosyl-L-methionine: Lys-88, Trp-102, Lys-107, Gly-126, Met-192, Tyr-196, and Arg-311.

The protein belongs to the class I-like SAM-binding methyltransferase superfamily. CmoB family. In terms of assembly, homotetramer.

It carries out the reaction carboxy-S-adenosyl-L-methionine + 5-hydroxyuridine(34) in tRNA = 5-carboxymethoxyuridine(34) in tRNA + S-adenosyl-L-homocysteine + H(+). In terms of biological role, catalyzes carboxymethyl transfer from carboxy-S-adenosyl-L-methionine (Cx-SAM) to 5-hydroxyuridine (ho5U) to form 5-carboxymethoxyuridine (cmo5U) at position 34 in tRNAs. The sequence is that of tRNA U34 carboxymethyltransferase from Pseudomonas fluorescens (strain ATCC BAA-477 / NRRL B-23932 / Pf-5).